We begin with the raw amino-acid sequence, 366 residues long: L-tyrosine C(3)-methyltransferase (366 aa).

Residues 1 to 12 show a composition bias toward polar residues; it reads MTISLENTTVGQ. A disordered region spans residues 1–22; sequence MTISLENTTVGQNPAGGPPTGK. Position 223 (glutamate 223) interacts with S-adenosyl-L-methionine.

This sequence belongs to the class I-like SAM-binding methyltransferase superfamily. Cation-independent O-methyltransferase family.

The catalysed reaction is L-tyrosine + S-adenosyl-L-methionine = 3-methyl-L-tyrosine + S-adenosyl-L-homocysteine + H(+). The protein operates within antibiotic biosynthesis. Its function is as follows. C-methyltransferase that mediates the methylation of tyrosine into 3-methyl-L-tyrosine (3-Me-Tyr) in biosynthesis of saframycin A, a potent antitumor antibiotic that belongs to the tetrahydroisoquinoline family. Involved in biosynthesis of 3-hydroxy-5-methyl-O-methyltyrosine (3-OH-5-Me-OMe-Tyr), a core structure of saframycin A. This Streptomyces lavendulae protein is L-tyrosine C(3)-methyltransferase.